Consider the following 858-residue polypeptide: ATP-dependent DNA helicase Q-like SIM (858 aa).

In terms of domain architecture, UBA spans 2 to 44 (DLSSDQLVMKIVEMGFEKLDALEAVKAVGGKSCDDAVEYILKG). In terms of domain architecture, Helicase ATP-binding spans 177-353 (LSTWVAHKDC…LESLHLSKET (177 aa)). 190 to 197 (AATGSGKS) is a binding site for ATP. The short motif at 288 to 291 (DEAH) is the DEAH box element. Positions 402 to 450 (LAVISRESEEQTDFGSHDSENIHETDYDEDEEDQENSLAKKNSSNGKEL) are disordered. A compositionally biased stretch (basic and acidic residues) spans 416–426 (GSHDSENIHET). Over residues 427–436 (DYDEDEEDQE) the composition is skewed to acidic residues. Residues 437–448 (NSLAKKNSSNGK) show a composition bias toward polar residues. A Helicase C-terminal domain is found at 491-627 (EKQKDLEGLT…QTEQAYKMLS (137 aa)). The tract at residues 822 to 858 (RQRLERRERKPRRERKPRKKRTRGRSSTKLHPWRSKE) is disordered. Residues 830–858 (RKPRRERKPRKKRTRGRSSTKLHPWRSKE) are compositionally biased toward basic residues.

It belongs to the helicase family. RecQ subfamily. The cofactor is Mg(2+). Requires Mn(2+) as cofactor. In terms of tissue distribution, mostly expressed in roots and seedlings, and, to a lower extent, in leaves, shoots, shoot apical mersitem, inflorescences, flowers, siliques and seeds.

It is found in the nucleus. The enzyme catalyses Couples ATP hydrolysis with the unwinding of duplex DNA by translocating in the 3'-5' direction.. It catalyses the reaction ATP + H2O = ADP + phosphate + H(+). In terms of biological role, plant specific, probable 3'-5' DNA helicase that may play a role in the repair of DNA. The protein is ATP-dependent DNA helicase Q-like SIM (RECQSIM) of Arabidopsis thaliana (Mouse-ear cress).